Reading from the N-terminus, the 485-residue chain is Bindin (485 aa).

The first 20 residues, 1–20, serve as a signal peptide directing secretion; sequence MGFHQISVIIVVLALASARA. Positions 21–247 are excised as a propeptide; the sequence is ADEFPSHTDT…DSERGARKKR (227 aa). Disordered stretches follow at residues 157-195, 219-273, and 305-331; these read GETR…DLAP, ISGH…PAQQ, and GGGQ…SDSL. The segment covering 172-192 has biased composition (basic and acidic residues); that stretch reads DVSKRASPRKGDEPAGHKLKD. Positions 250 to 264 are enriched in polar residues; that stretch reads NQGNYPQAMNPQSRG. Residues 317–331 show a composition bias toward acidic residues; the sequence is AEADNADYDEYSDSL. Positions 371 to 379 are fucose-binding domain; sequence LRHLRHHSN. Positions 459–485 are disordered; that stretch reads QQGMGGVPQRMGGQPQGNAYNQGYRQG. A compositionally biased stretch (low complexity) spans 465–475; it reads VPQRMGGQPQG. Over residues 476-485 the composition is skewed to polar residues; the sequence is NAYNQGYRQG.

Belongs to the bindin family.

The protein resides in the cytoplasmic vesicle. Its subcellular location is the secretory vesicle. It is found in the acrosome lumen. In terms of biological role, species-specific sea urchin sperm protein required for adhesion of sperm to the egg surface during fertilization. Bindin coats the acrosomal process after it is externalized by the acrosome reaction. It binds to sulfated, fucose-containing polysaccharides on the vitelline layer receptor proteoglycans which cover the egg plasma membrane. The chain is Bindin from Mesocentrotus franciscanus (Giant red sea urchin).